A 131-amino-acid chain; its full sequence is Small ribosomal subunit protein uS8 (131 aa).

This sequence belongs to the universal ribosomal protein uS8 family. As to quaternary structure, part of the 30S ribosomal subunit. Contacts proteins S5 and S12.

One of the primary rRNA binding proteins, it binds directly to 16S rRNA central domain where it helps coordinate assembly of the platform of the 30S subunit. In Clostridium novyi (strain NT), this protein is Small ribosomal subunit protein uS8.